A 249-amino-acid chain; its full sequence is Tabinhibitin 4 (249 aa).

A signal peptide spans 1-23 (MTLNVYFVLLSPYSLQSVPLPLT). The Cell attachment site signature appears at 31–33 (RGD). The region spanning 64-207 (LQKTNWLRGV…LKRALFTCNF (144 aa)) is the SCP domain. Positions 220–222 (RGD) match the Cell attachment site motif.

This sequence belongs to the CRISP family. In terms of tissue distribution, expressed in salivary glands.

It localises to the secreted. In terms of biological role, inhibits platelet aggregation induced by all agonists tested (ADP, arachidonic acid, the thromboxane A2 analog U46619, thrombin, and snake venom snaclecs (TMVA that activates platelet through GPIB, and stejnulxin that specifically acts through GPVI (GP6))). May act by competing with fibrinogen for binding to glycoprotein IIb/IIIa (ITGA2B/ITGB3). The sequence is that of Tabinhibitin 4 from Tabanus yao (Horsefly).